A 450-amino-acid polypeptide reads, in one-letter code: Sulfite exporter TauE/SafE family protein 1 (450 aa).

12 consecutive transmembrane segments (helical) span residues 5 to 25 (LVPL…SALA), 48 to 68 (TIEV…AASI), 70 to 90 (SAGG…IAGL), 97 to 117 (SFSA…NLFL), 130 to 150 (FDLA…GVIC), 153 to 173 (MFPN…STMK), 223 to 243 (FPWM…SINL), 261 to 281 (ALYW…TLCI), 316 to 336 (VMAL…GMLI), 340 to 360 (LLQI…MVLF), 378 to 398 (GTAA…LMVV), and 408 to 428 (ASII…LMTT).

The protein belongs to the 4-toluene sulfonate uptake permease (TSUP) (TC 2.A.102) family.

It is found in the membrane. In Arabidopsis thaliana (Mouse-ear cress), this protein is Sulfite exporter TauE/SafE family protein 1.